A 260-amino-acid polypeptide reads, in one-letter code: Hydroxyacylglutathione hydrolase (260 aa).

Zn(2+) contacts are provided by histidine 61, histidine 63, aspartate 65, histidine 66, histidine 119, aspartate 138, and histidine 176.

Belongs to the metallo-beta-lactamase superfamily. Glyoxalase II family. Monomer. The cofactor is Zn(2+).

It catalyses the reaction an S-(2-hydroxyacyl)glutathione + H2O = a 2-hydroxy carboxylate + glutathione + H(+). The protein operates within secondary metabolite metabolism; methylglyoxal degradation; (R)-lactate from methylglyoxal: step 2/2. Functionally, thiolesterase that catalyzes the hydrolysis of S-D-lactoyl-glutathione to form glutathione and D-lactic acid. The chain is Hydroxyacylglutathione hydrolase from Brucella suis (strain ATCC 23445 / NCTC 10510).